The chain runs to 184 residues: Translation initiation factor IF-3 (184 aa).

This sequence belongs to the IF-3 family. Monomer.

It is found in the cytoplasm. Its function is as follows. IF-3 binds to the 30S ribosomal subunit and shifts the equilibrium between 70S ribosomes and their 50S and 30S subunits in favor of the free subunits, thus enhancing the availability of 30S subunits on which protein synthesis initiation begins. This chain is Translation initiation factor IF-3, found in Mycoplasma genitalium (strain ATCC 33530 / DSM 19775 / NCTC 10195 / G37) (Mycoplasmoides genitalium).